A 448-amino-acid chain; its full sequence is ATP synthase subunit b-delta (448 aa).

An ATP synthase subunit b region spans residues M1–V168. The chain crosses the membrane as a helical span at residues F4 to P24. The tract at residues P169–N448 is ATP synthase subunit delta.

This sequence in the N-terminal section; belongs to the ATPase B chain family. The protein in the C-terminal section; belongs to the ATPase delta chain family. As to quaternary structure, F-type ATPases have 2 components, F(1) - the catalytic core - and F(0) - the membrane proton channel. F(1) has five subunits: alpha(3), beta(3), gamma(1), delta(1), epsilon(1). F(0) has three main subunits: a(1), b(2) and c(10-14). The alpha and beta chains form an alternating ring which encloses part of the gamma chain. F(1) is attached to F(0) by a central stalk formed by the gamma and epsilon chains, while a peripheral stalk is formed by the delta and b chains.

Its subcellular location is the cell membrane. Functionally, f(1)F(0) ATP synthase produces ATP from ADP in the presence of a proton or sodium gradient. F-type ATPases consist of two structural domains, F(1) containing the extramembraneous catalytic core and F(0) containing the membrane proton channel, linked together by a central stalk and a peripheral stalk. During catalysis, ATP synthesis in the catalytic domain of F(1) is coupled via a rotary mechanism of the central stalk subunits to proton translocation. Its function is as follows. This fusion protein includes a component of the F(0) channel (subunit b) and of the F(1) subunit (subunit delta). Two copies of subunit b and one of delta together form the peripheral 'stator' stalk which links F(1) to F(0). The polypeptide is ATP synthase subunit b-delta (atpFH) (Mycobacteroides abscessus (strain ATCC 19977 / DSM 44196 / CCUG 20993 / CIP 104536 / JCM 13569 / NCTC 13031 / TMC 1543 / L948) (Mycobacterium abscessus)).